A 371-amino-acid polypeptide reads, in one-letter code: MGASVTTGLQMAAARPCIPACQRLLGSRAALPSFGRALSTQTGFASCRKTASAGPFVSLNHKRFAVRAMSAQGLPIDLRGKRAFIAGVADDNGYGWAIAKALAAAGAEILVGTWVPALNIFETSLRRGKFDESRKLPDGSLMEITKVYPLDAVFDSPEDVPDDVKANKRYAGSSNWTVKEVAETVKNDFGTIDILVHSLANGPEVKNSLLETSRKGYLAAVSASSYSFISLLQHFLPIMNPGGATISLTYIASERTIPGYGGGMSSAKAALESDTRVLAYEAGRKGKIRVNTISAGPLGSRAAKAIGFIEKMIEYSYVNAPLQKELLADEVGNTAAFLASPLASAITGSTIYVDNGLNTMGLALDSPTLST.

A chloroplast-targeting transit peptide spans 1–67; the sequence is MGASVTTGLQ…SLNHKRFAVR (67 aa). Residues glycine 87, tyrosine 94, 151–152, 198–199, and leucine 248 each bind NAD(+); these read DA and SL. Catalysis depends on proton acceptor residues tyrosine 250 and tyrosine 260. NAD(+) is bound by residues lysine 268 and 298–302; that span reads LGSRA.

This sequence belongs to the short-chain dehydrogenases/reductases (SDR) family. FabI subfamily. As to quaternary structure, homotetramer.

It localises to the plastid. The protein localises to the chloroplast. It catalyses the reaction a 2,3-saturated acyl-[ACP] + NAD(+) = a (2E)-enoyl-[ACP] + NADH + H(+). The protein operates within lipid metabolism; fatty acid biosynthesis. In terms of biological role, catalyzes the NAD-dependent reduction of a carbon-carbon double bond in an enoyl moiety that is covalently linked to an acyl carrier protein (ACP). Catalyzes the last reduction step in the de novo synthesis cycle of fatty acids. Involved in the elongation cycle of fatty acids which are used in lipid metabolism. Required for normal plant growth. The sequence is that of Enoyl-[acyl-carrier-protein] reductase [NADH] 2, chloroplastic from Oryza sativa subsp. japonica (Rice).